Consider the following 444-residue polypeptide: C4-dicarboxylate transport protein (444 aa).

9 helical membrane-spanning segments follow: residues 17-37 (PFYT…ILLG), 57-77 (LVKM…IAGM), 92-112 (LYFL…ANVV), 139-159 (EQSI…GAFA), 161-181 (GDIL…AMVG), 201-221 (LVAI…AFTI), 234-254 (MLIG…LGAV), 320-340 (IYMT…LSWG), and 368-388 (AATL…ILGI).

This sequence belongs to the dicarboxylate/amino acid:cation symporter (DAACS) (TC 2.A.23) family.

The protein localises to the cell inner membrane. Functionally, responsible for the transport of dicarboxylates such as succinate, fumarate, and malate from the periplasm across the membrane. This chain is C4-dicarboxylate transport protein, found in Rhizobium johnstonii (strain DSM 114642 / LMG 32736 / 3841) (Rhizobium leguminosarum bv. viciae).